The chain runs to 241 residues: Small ribosomal subunit protein uS3 (241 aa).

Positions 22 to 91 constitute a KH type-2 domain; that stretch reads VDEYLAYKFH…NPQVTVVKVE (70 aa). The tract at residues 218–241 is disordered; the sequence is EMQQTQPEAPTLEETVEQSGGETQ.

It belongs to the universal ribosomal protein uS3 family. As to quaternary structure, part of the 30S ribosomal subunit.

Its function is as follows. Binds the lower part of the 30S subunit head. The chain is Small ribosomal subunit protein uS3 from Ignicoccus hospitalis (strain KIN4/I / DSM 18386 / JCM 14125).